The sequence spans 421 residues: CinA-like protein (421 aa).

The protein belongs to the CinA family.

In Synechococcus elongatus (strain ATCC 33912 / PCC 7942 / FACHB-805) (Anacystis nidulans R2), this protein is CinA-like protein.